A 282-amino-acid chain; its full sequence is BURP domain-containing protein BNM2A (282 aa).

An N-terminal signal peptide occupies residues 1–26 (MASLRFSVTFPALLSLLLLSLWVVEA). The region spanning 60–282 (FFKISDLKLG…PLDNIVWVSK (223 aa)) is the BURP domain.

As to expression, expressed in the radicle and cotyledon of germinating seeds 2 days post-imbibition (DPI), in stems and roots of 30-DPI young plants and in floral buds, but not in fully open flowers or leaves. Expressed in the embryo and seed coat tissues of developing seeds. The protein accumulates only in seeds and only long after transcript accumulation becomes evident.

It is found in the protein storage vacuole. The chain is BURP domain-containing protein BNM2A from Brassica napus (Rape).